Reading from the N-terminus, the 223-residue chain is Na(+)-translocating NADH-quinone reductase subunit D (223 aa).

5 helical membrane passes run T42–I62, I66–V86, V103–M123, F131–I151, and N178–L198.

The protein belongs to the NqrDE/RnfAE family. Composed of six subunits; NqrA, NqrB, NqrC, NqrD, NqrE and NqrF.

Its subcellular location is the cell inner membrane. It carries out the reaction a ubiquinone + n Na(+)(in) + NADH + H(+) = a ubiquinol + n Na(+)(out) + NAD(+). In terms of biological role, NQR complex catalyzes the reduction of ubiquinone-1 to ubiquinol by two successive reactions, coupled with the transport of Na(+) ions from the cytoplasm to the periplasm. NqrA to NqrE are probably involved in the second step, the conversion of ubisemiquinone to ubiquinol. This is Na(+)-translocating NADH-quinone reductase subunit D from Pseudomonas paraeruginosa (strain DSM 24068 / PA7) (Pseudomonas aeruginosa (strain PA7)).